The following is a 418-amino-acid chain: MTLLALGINHKTAPVSLRERVSFSPDKLDQALDSLLAQPMVQGGVVLSTCNRTELYLSVEEQDNLQEALIRWLCDYHNLNEEDLRKSLYWHQDNDAVSHLMRVASGLDSLVLGEPQILGQVKKAFADSQKGHMKASELERMFQKSFSVAKRVRTETDIGASAVSVAFAACTLARQIFESLSTVTVLLVGAGETIELVARHLREHKVQKMIIANRTRERAQILADEVGAEVIALSDIDERLREADIIISSTASPLPIIGKGMVERALKSRRNQPMLLVDIAVPRDVEPEVGKLANAYLYSVDDLQSIISHNLAQRKAAAVEAETIVAQETSEFMSWLRAQSASETIREYRSQAEHIRDELTAKALAALEQGGDAQAIMQDLAWKLTNRLIHAPTKSLQQAARDGDNERLNILRDSLGLE.

Residues 49 to 52 (TCNR), Ser-109, 114 to 116 (EPQ), and Gln-120 each bind substrate. The Nucleophile role is filled by Cys-50. NADP(+) is bound at residue 189–194 (GAGETI).

The protein belongs to the glutamyl-tRNA reductase family. As to quaternary structure, homodimer.

The catalysed reaction is (S)-4-amino-5-oxopentanoate + tRNA(Glu) + NADP(+) = L-glutamyl-tRNA(Glu) + NADPH + H(+). It participates in porphyrin-containing compound metabolism; protoporphyrin-IX biosynthesis; 5-aminolevulinate from L-glutamyl-tRNA(Glu): step 1/2. Functionally, catalyzes the NADPH-dependent reduction of glutamyl-tRNA(Glu) to glutamate 1-semialdehyde (GSA). The chain is Glutamyl-tRNA reductase from Escherichia fergusonii (strain ATCC 35469 / DSM 13698 / CCUG 18766 / IAM 14443 / JCM 21226 / LMG 7866 / NBRC 102419 / NCTC 12128 / CDC 0568-73).